The following is a 377-amino-acid chain: Glutamate 5-kinase (377 aa).

Lys-20 is a binding site for ATP. 3 residues coordinate substrate: Ser-60, Asp-147, and Asn-159. An ATP-binding site is contributed by 179 to 180 (TD). The 79-residue stretch at 285–363 (AGRLVIDDGA…DKVYQVLGEA (79 aa)) folds into the PUA domain.

It belongs to the glutamate 5-kinase family.

It localises to the cytoplasm. The catalysed reaction is L-glutamate + ATP = L-glutamyl 5-phosphate + ADP. The protein operates within amino-acid biosynthesis; L-proline biosynthesis; L-glutamate 5-semialdehyde from L-glutamate: step 1/2. In terms of biological role, catalyzes the transfer of a phosphate group to glutamate to form L-glutamate 5-phosphate. This Acinetobacter baumannii (strain SDF) protein is Glutamate 5-kinase.